We begin with the raw amino-acid sequence, 241 residues long: Probable xyloglucan-specific endo-beta-1,4-glucanase A (241 aa).

Residues 1–15 (MKVLALSALLSLASA) form the signal peptide. The N-linked (GlcNAc...) asparagine glycan is linked to Asn47.

Belongs to the glycosyl hydrolase 12 (cellulase H) family.

Its subcellular location is the secreted. The catalysed reaction is xyloglucan + H2O = xyloglucan oligosaccharides.. Catalyzes endohydrolysis of 1,4-beta-D-glucosidic linkages in xyloglucan with retention of the beta-configuration of the glycosyl residues. Specific for xyloglucan and does not hydrolyze other cell wall components. The chain is Probable xyloglucan-specific endo-beta-1,4-glucanase A (xgeA) from Aspergillus niger (strain ATCC MYA-4892 / CBS 513.88 / FGSC A1513).